A 347-amino-acid polypeptide reads, in one-letter code: Heat-inducible transcription repressor HrcA (347 aa).

The protein belongs to the HrcA family.

Its function is as follows. Negative regulator of class I heat shock genes (grpE-dnaK-dnaJ and groELS operons). Prevents heat-shock induction of these operons. The protein is Heat-inducible transcription repressor HrcA of Sphingopyxis alaskensis (strain DSM 13593 / LMG 18877 / RB2256) (Sphingomonas alaskensis).